Here is a 272-residue protein sequence, read N- to C-terminus: Small ribosomal subunit protein uS3 (272 aa).

One can recognise a KH type-2 domain in the interval 43–111 (IRELMTTGME…QIQLNILEVK (69 aa)). The segment at 218-272 (AKEAAQPSGRGRGGERRGGGERRRRNDRAERAPRQENAGAGAETPAAAPAEGGNA) is disordered. Residues 229-238 (RGGERRGGGE) are compositionally biased toward basic and acidic residues. The segment covering 253–272 (ENAGAGAETPAAAPAEGGNA) has biased composition (low complexity).

This sequence belongs to the universal ribosomal protein uS3 family. As to quaternary structure, part of the 30S ribosomal subunit. Forms a tight complex with proteins S10 and S14.

Functionally, binds the lower part of the 30S subunit head. Binds mRNA in the 70S ribosome, positioning it for translation. The sequence is that of Small ribosomal subunit protein uS3 from Micrococcus luteus (strain ATCC 4698 / DSM 20030 / JCM 1464 / CCM 169 / CCUG 5858 / IAM 1056 / NBRC 3333 / NCIMB 9278 / NCTC 2665 / VKM Ac-2230) (Micrococcus lysodeikticus).